Consider the following 180-residue polypeptide: ADP-ribosylation factor 5 (180 aa).

A lipid anchor (N-myristoyl glycine) is attached at G2. Residues 24–31, 67–71, and 126–129 each bind GTP; these read GLDAAGKT, DVGGQ, and NKQD.

It belongs to the small GTPase superfamily. Arf family. Interacts (when activated) with GGA1, GGA2 and GGA3; the interaction is required for proper subcellular location of GGA1, GGA2 and GGA3. Binds ASAP2. Interacts with NCS1/FREQ at the Golgi complex. Interacts with RAB11FIP3 and RAB11FIP4.

The protein localises to the golgi apparatus. Its subcellular location is the cytoplasm. It is found in the perinuclear region. It localises to the membrane. The protein resides in the trans-Golgi network membrane. Its function is as follows. GTP-binding protein involved in protein trafficking; may modulate vesicle budding and uncoating within the Golgi apparatus. (Microbial infection) Functions as an allosteric activator of the cholera toxin catalytic subunit, an ADP-ribosyltransferase. The polypeptide is ADP-ribosylation factor 5 (ARF5) (Homo sapiens (Human)).